A 189-amino-acid chain; its full sequence is Elongation factor P (189 aa).

Lys-35 carries the N6-(3,6-diaminohexanoyl)-5-hydroxylysine modification.

This sequence belongs to the elongation factor P family. Post-translationally, may be beta-lysylated on the epsilon-amino group of Lys-35 by the combined action of EpmA and EpmB, and then hydroxylated on the C5 position of the same residue by EpmC (if this protein is present). Lysylation is critical for the stimulatory effect of EF-P on peptide-bond formation. The lysylation moiety may extend toward the peptidyltransferase center and stabilize the terminal 3-CCA end of the tRNA. Hydroxylation of the C5 position on Lys-35 may allow additional potential stabilizing hydrogen-bond interactions with the P-tRNA.

Its subcellular location is the cytoplasm. It functions in the pathway protein biosynthesis; polypeptide chain elongation. Involved in peptide bond synthesis. Alleviates ribosome stalling that occurs when 3 or more consecutive Pro residues or the sequence PPG is present in a protein, possibly by augmenting the peptidyl transferase activity of the ribosome. Modification of Lys-35 is required for alleviation. The sequence is that of Elongation factor P from Wigglesworthia glossinidia brevipalpis.